Reading from the N-terminus, the 248-residue chain is MGQKIHPHGLRLGITSDWKSHWYADKSYADYVAEDIKIREFLSKGLDRAGIADVVIERTRDRVRVDIHTARPGIVIGRRGAEADRIRRELEKLTGKQVALNILEVKNVDANAKLVAQSIAEQLTNRVAFRRAMRKAIQSAMRQPQVKGIKVVCSGRLGGAEMSRTERYHEGRVPLHTLRAEIDYGTYEAHTTFGRIGVKVWIYKGDVVGGRRESEINAPAERRGRGDRNARPRRGGQRRQRAEQKQEG.

Positions 38–106 (IREFLSKGLD…QVALNILEVK (69 aa)) constitute a KH type-2 domain. Residues 214 to 230 (SEINAPAERRGRGDRNA) show a composition bias toward basic and acidic residues. Positions 214–248 (SEINAPAERRGRGDRNARPRRGGQRRQRAEQKQEG) are disordered.

Belongs to the universal ribosomal protein uS3 family. As to quaternary structure, part of the 30S ribosomal subunit. Forms a tight complex with proteins S10 and S14.

In terms of biological role, binds the lower part of the 30S subunit head. Binds mRNA in the 70S ribosome, positioning it for translation. The sequence is that of Small ribosomal subunit protein uS3 from Corynebacterium glutamicum (strain R).